We begin with the raw amino-acid sequence, 122 residues long: Autophagy-related protein 8b (122 aa).

Gly-117 carries the Phosphatidylethanolamine amidated glycine lipid modification. The propeptide at 118 to 122 is removed in mature form; it reads GSFYC.

Belongs to the ATG8 family. In terms of assembly, interacts with ATG4. Interacts with NBR1. In terms of processing, the C-terminal 5 residues are removed by ATG4 to expose Gly-117 at the C-terminus. This Gly-117 forms then a thioester bond with the 'Cys-558' of ATG7 (E1-like activating enzyme) before being transferred to the 'Cys-258' of ATG3 (the specific E2 conjugating enzyme), in order to be finally amidated with phosphatidylethanolamine. This lipid modification anchors ATG8 to autophagosomes. Constitutively expressed.

It localises to the cytoplasmic vesicle. The protein resides in the autophagosome membrane. The protein localises to the vacuole membrane. It is found in the cytoplasm. Its subcellular location is the cytoskeleton. Ubiquitin-like modifier involved in autophagosomes formation. May mediate the delivery of the autophagosomes to the vacuole via the microtubule cytoskeleton. The protein is Autophagy-related protein 8b (ATG8B) of Arabidopsis thaliana (Mouse-ear cress).